A 252-amino-acid polypeptide reads, in one-letter code: Membrane protein insertase YidC (252 aa).

The N-terminal stretch at 1-19 (MKKVLWIIIIILMVGALAG) is a signal peptide. C20 carries N-palmitoyl cysteine lipidation. C20 carries S-diacylglycerol cysteine lipidation. 6 helical membrane-spanning segments follow: residues 34 to 54 (IWNH…ADLL), 58 to 78 (FGLS…PLMI), 131 to 151 (MAGC…YFAI), 162 to 182 (FLWF…VAGI), 201 to 221 (VIIY…PSAL), and 223 to 243 (LYWV…VVRF).

This sequence belongs to the OXA1/ALB3/YidC family. Type 2 subfamily.

Its subcellular location is the cell membrane. In terms of biological role, required for the insertion and/or proper folding and/or complex formation of integral membrane proteins into the membrane. Involved in integration of membrane proteins that insert both dependently and independently of the Sec translocase complex, as well as at least some lipoproteins. The protein is Membrane protein insertase YidC of Alkalihalophilus pseudofirmus (strain ATCC BAA-2126 / JCM 17055 / OF4) (Bacillus pseudofirmus).